The chain runs to 324 residues: BURP domain-containing protein 5 (324 aa).

Residues 1–30 (MCATLCTLLDEISILILMLLLIQLEIRVSA) form the signal peptide. The 215-residue stretch at 109-323 (FFLETNLQSS…QPDVVVWTRR (215 aa)) folds into the BURP domain.

As to expression, expressed in panicles.

The chain is BURP domain-containing protein 5 (BURP5) from Oryza sativa subsp. japonica (Rice).